A 113-amino-acid polypeptide reads, in one-letter code: U11-theraphotoxin-Hhn1a (113 aa).

Residues Met1–Ala21 form the signal peptide. Positions Asp22–Arg74 are excised as a propeptide. Residues Lys58–Asn69 are compositionally biased toward basic and acidic residues. The tract at residues Lys58–Cys82 is disordered. 3 disulfides stabilise this stretch: Cys75/Cys90, Cys82/Cys95, and Cys89/Cys110.

It belongs to the neurotoxin 14 (magi-1) family. 01 (HNTX-16) subfamily. Expressed by the venom gland.

Its subcellular location is the secreted. Functionally, probable ion channel inhibitor. The chain is U11-theraphotoxin-Hhn1a from Cyriopagopus hainanus (Chinese bird spider).